Consider the following 193-residue polypeptide: Adenine phosphoribosyltransferase (193 aa).

This sequence belongs to the purine/pyrimidine phosphoribosyltransferase family. Homodimer.

It is found in the cytoplasm. It carries out the reaction AMP + diphosphate = 5-phospho-alpha-D-ribose 1-diphosphate + adenine. The protein operates within purine metabolism; AMP biosynthesis via salvage pathway; AMP from adenine: step 1/1. Its function is as follows. Catalyzes a salvage reaction resulting in the formation of AMP, that is energically less costly than de novo synthesis. This chain is Adenine phosphoribosyltransferase, found in Chromobacterium violaceum (strain ATCC 12472 / DSM 30191 / JCM 1249 / CCUG 213 / NBRC 12614 / NCIMB 9131 / NCTC 9757 / MK).